A 284-amino-acid chain; its full sequence is Phosphatidylglycerol--prolipoprotein diacylglyceryl transferase (284 aa).

Transmembrane regions (helical) follow at residues 18-38, 62-82, 106-126, 136-156, 190-210, 218-238, and 252-272; these read LGGI…VIAF, YFLW…VLIY, FVGI…IASY, LLIY…FGRI, PSQL…VLWA, GLLI…AEFY, and LSMG…ILLY. R155 serves as a coordination point for a 1,2-diacyl-sn-glycero-3-phospho-(1'-sn-glycerol).

Belongs to the Lgt family.

The protein localises to the cell inner membrane. It carries out the reaction L-cysteinyl-[prolipoprotein] + a 1,2-diacyl-sn-glycero-3-phospho-(1'-sn-glycerol) = an S-1,2-diacyl-sn-glyceryl-L-cysteinyl-[prolipoprotein] + sn-glycerol 1-phosphate + H(+). It participates in protein modification; lipoprotein biosynthesis (diacylglyceryl transfer). Catalyzes the transfer of the diacylglyceryl group from phosphatidylglycerol to the sulfhydryl group of the N-terminal cysteine of a prolipoprotein, the first step in the formation of mature lipoproteins. The sequence is that of Phosphatidylglycerol--prolipoprotein diacylglyceryl transferase from Helicobacter pylori (strain G27).